The chain runs to 603 residues: Elongation factor 4 (603 aa).

The tr-type G domain occupies 7–189 (SRIRNFCIIA…SIVHLVPPPS (183 aa)). GTP-binding positions include 19–24 (DHGKST) and 136–139 (NKID).

It belongs to the TRAFAC class translation factor GTPase superfamily. Classic translation factor GTPase family. LepA subfamily.

The protein localises to the cell inner membrane. It carries out the reaction GTP + H2O = GDP + phosphate + H(+). In terms of biological role, required for accurate and efficient protein synthesis under certain stress conditions. May act as a fidelity factor of the translation reaction, by catalyzing a one-codon backward translocation of tRNAs on improperly translocated ribosomes. Back-translocation proceeds from a post-translocation (POST) complex to a pre-translocation (PRE) complex, thus giving elongation factor G a second chance to translocate the tRNAs correctly. Binds to ribosomes in a GTP-dependent manner. The sequence is that of Elongation factor 4 from Crocosphaera subtropica (strain ATCC 51142 / BH68) (Cyanothece sp. (strain ATCC 51142)).